The primary structure comprises 496 residues: Glycerol kinase (496 aa).

Threonine 12 lines the ADP pocket. ATP-binding residues include threonine 12, threonine 13, and serine 14. Threonine 12 is a binding site for sn-glycerol 3-phosphate. ADP is bound at residue arginine 16. 3 residues coordinate sn-glycerol 3-phosphate: arginine 82, glutamate 83, and tyrosine 134. Arginine 82, glutamate 83, and tyrosine 134 together coordinate glycerol. A Phosphohistidine; by HPr modification is found at histidine 230. Aspartate 244 contributes to the sn-glycerol 3-phosphate binding site. Aspartate 244 and glutamine 245 together coordinate glycerol. Residues threonine 266 and glycine 309 each contribute to the ADP site. ATP is bound by residues threonine 266, glycine 309, glutamine 313, and glycine 410. Residues glycine 410 and asparagine 414 each coordinate ADP.

This sequence belongs to the FGGY kinase family. In terms of assembly, homotetramer and homodimer (in equilibrium). Post-translationally, the phosphoenolpyruvate-dependent sugar phosphotransferase system (PTS), including enzyme I, and histidine-containing protein (HPr) are required for the phosphorylation, which leads to the activation of the enzyme.

It catalyses the reaction glycerol + ATP = sn-glycerol 3-phosphate + ADP + H(+). It participates in polyol metabolism; glycerol degradation via glycerol kinase pathway; sn-glycerol 3-phosphate from glycerol: step 1/1. With respect to regulation, activated by phosphorylation and inhibited by fructose 1,6-bisphosphate (FBP). Key enzyme in the regulation of glycerol uptake and metabolism. Catalyzes the phosphorylation of glycerol to yield sn-glycerol 3-phosphate. This is Glycerol kinase from Bacillus licheniformis (strain ATCC 14580 / DSM 13 / JCM 2505 / CCUG 7422 / NBRC 12200 / NCIMB 9375 / NCTC 10341 / NRRL NRS-1264 / Gibson 46).